The primary structure comprises 128 residues: Ribonuclease P protein component (128 aa).

Belongs to the RnpA family. Consists of a catalytic RNA component (M1 or rnpB) and a protein subunit.

The enzyme catalyses Endonucleolytic cleavage of RNA, removing 5'-extranucleotides from tRNA precursor.. In terms of biological role, RNaseP catalyzes the removal of the 5'-leader sequence from pre-tRNA to produce the mature 5'-terminus. It can also cleave other RNA substrates such as 4.5S RNA. The protein component plays an auxiliary but essential role in vivo by binding to the 5'-leader sequence and broadening the substrate specificity of the ribozyme. The chain is Ribonuclease P protein component from Methylococcus capsulatus (strain ATCC 33009 / NCIMB 11132 / Bath).